The chain runs to 529 residues: Bifunctional purine biosynthesis protein PurH (529 aa).

The 148-residue stretch at 1 to 148 folds into the MGS-like domain; it reads MQQRRPVRRA…KNHKDVAIVV (148 aa). Lys287 is modified (N6-acetyllysine).

The protein belongs to the PurH family.

The catalysed reaction is (6R)-10-formyltetrahydrofolate + 5-amino-1-(5-phospho-beta-D-ribosyl)imidazole-4-carboxamide = 5-formamido-1-(5-phospho-D-ribosyl)imidazole-4-carboxamide + (6S)-5,6,7,8-tetrahydrofolate. It carries out the reaction IMP + H2O = 5-formamido-1-(5-phospho-D-ribosyl)imidazole-4-carboxamide. It functions in the pathway purine metabolism; IMP biosynthesis via de novo pathway; 5-formamido-1-(5-phospho-D-ribosyl)imidazole-4-carboxamide from 5-amino-1-(5-phospho-D-ribosyl)imidazole-4-carboxamide (10-formyl THF route): step 1/1. Its pathway is purine metabolism; IMP biosynthesis via de novo pathway; IMP from 5-formamido-1-(5-phospho-D-ribosyl)imidazole-4-carboxamide: step 1/1. The chain is Bifunctional purine biosynthesis protein PurH from Escherichia fergusonii (strain ATCC 35469 / DSM 13698 / CCUG 18766 / IAM 14443 / JCM 21226 / LMG 7866 / NBRC 102419 / NCTC 12128 / CDC 0568-73).